The following is a 225-amino-acid chain: Glutathione S-transferase-like protein tpcF (225 aa).

One can recognise a GST N-terminal domain in the interval 4-85; that stretch reads IQPITVYGKG…YLVSHYDPDH (82 aa). The region spanning 92–225 is the GST C-terminal domain; the sequence is GSNLAALATQ…KGMADIFPST (134 aa).

The protein belongs to the GST superfamily. As to expression, specifically expressed in conidia.

The protein operates within secondary metabolite biosynthesis. In terms of biological role, glutathione S-transferase-like protein; part of the gene cluster that mediates the biosynthesis of trypacidin, a mycotoxin with antiprotozoal activity and that plays a role in the infection process. The pathway begins with the synthesis of atrochrysone thioester by the polyketide synthase (PKS) tpcC. The atrochrysone carboxyl ACP thioesterase tpcB then breaks the thioester bond and releases the atrochrysone carboxylic acid from tpcC. The decarboxylase tpcK converts atrochrysone carboxylic acid to atrochrysone which is further reduced into emodin anthrone. The next step is performed by the emodin anthrone oxygenase tpcL that catalyzes the oxidation of emodinanthrone to emodin. Emodin O-methyltransferase encoded by tpcA catalyzes methylation of the 8-hydroxy group of emodin to form questin. Ring cleavage of questin by questin oxidase tpcI leads to desmethylsulochrin via several intermediates including questin epoxide. Another methylation step catalyzed by tpcM leads to the formation of sulochrin which is further converted to monomethylsulfochrin by tpcH. Finally, the tpcJ catalyzes the conversion of monomethylsulfochrin to trypacidin. Trypacidin is toxic for human pulmonary and bronchial epithelial cells by initiating the intracellular formation of nitric oxide (NO) and hydrogen peroxide (H(2)O(2)), thus triggering host necrotic cell death. The trypacidin pathway is also able to produce endocrocin via a distinct route from the endocrocin Enc pathway. In Aspergillus fumigatus (strain ATCC MYA-4609 / CBS 101355 / FGSC A1100 / Af293) (Neosartorya fumigata), this protein is Glutathione S-transferase-like protein tpcF.